The sequence spans 451 residues: Phosphoglucosamine mutase (451 aa).

S102 serves as the catalytic Phosphoserine intermediate. 4 residues coordinate Mg(2+): S102, D242, D244, and D246. S102 is subject to Phosphoserine.

It belongs to the phosphohexose mutase family. The cofactor is Mg(2+). Post-translationally, activated by phosphorylation.

The enzyme catalyses alpha-D-glucosamine 1-phosphate = D-glucosamine 6-phosphate. Its function is as follows. Catalyzes the conversion of glucosamine-6-phosphate to glucosamine-1-phosphate. The polypeptide is Phosphoglucosamine mutase (Staphylococcus aureus (strain Mu3 / ATCC 700698)).